Consider the following 235-residue polypeptide: Eukaryotic translation initiation factor 4E-1 (235 aa).

Residues 16 to 25 show a composition bias toward basic and acidic residues; it reads VNKHRGVRSD. The interval 16 to 56 is disordered; the sequence is VNKHRGVRSDGEEDEQLEEGEIVGGDADTLSSSSSSRPGTA. Residues 26–36 are compositionally biased toward acidic residues; sequence GEEDEQLEEGE. EIF4G-binding stretches follow at residues 60–63 and 70–106; these read HPLE and FDTP…NNIH. MRNA contacts are provided by residues 78-83, Lys110, and 128-129; these read KQVAWG and WE. A disulfide bridge links Cys133 with Cys171. The interval 154 to 163 is EIF4G-binding; it reads YTLLAMIGEQ. MRNA is bound by residues 178 to 183 and 223 to 227; these read RARQEK and KTLDR.

The protein belongs to the eukaryotic initiation factor 4E family. EIF4F is a multi-subunit complex, the composition of which varies with external and internal environmental conditions. It is composed of at least EIF4A, EIF4E and EIF4G. EIF4E is also known to interact with other partners. In higher plants two isoforms of EIF4F have been identified, named isoform EIF4F and isoform EIF(iso)4F. Isoform EIF4F has subunits p220 and p26, whereas isoform EIF(iso)4F has subunits p82 and p28. In terms of assembly, (Microbial infection) Interacts with potyvirus viral genome-linked protein (VPg); this interaction is possible in susceptible hosts but impaired in resistant plants. In terms of processing, according to the redox status, the Cys-133-Cys-171 disulfide bridge may have a role in regulating protein function by affecting its ability to bind capped mRNA.

Its subcellular location is the nucleus. The protein localises to the cytoplasm. Functionally, component of the protein complex eIF4F, which is involved in the recognition of the mRNA cap, ATP-dependent unwinding of 5'-terminal secondary structure and recruitment of mRNA to the ribosome. Recognizes and binds the 7-methylguanosine-containing mRNA cap during an early step in the initiation of protein synthesis and facilitates ribosome binding by inducing the unwinding of the mRNAs secondary structures. Key component of recessive resistance to potyviruses. In terms of biological role, (Microbial infection) Susceptibility host factor required for viral infection by recruiting viral RNAs to the host ribosomal complex via an interaction with viral genome-linked protein (VPg). This Lactuca sativa (Garden lettuce) protein is Eukaryotic translation initiation factor 4E-1.